The sequence spans 186 residues: Cell division protein SepF (186 aa).

2 disordered regions span residues glutamate 14–serine 59 and glycine 157–glutamine 186. Positions aspartate 16–glutamate 27 are enriched in acidic residues. Residues serine 159–serine 171 show a composition bias toward low complexity.

Belongs to the SepF family. Homodimer. Interacts with FtsZ.

The protein resides in the cytoplasm. In terms of biological role, cell division protein that is part of the divisome complex and is recruited early to the Z-ring. Probably stimulates Z-ring formation, perhaps through the cross-linking of FtsZ protofilaments. Its function overlaps with FtsA. The chain is Cell division protein SepF from Synechocystis sp. (strain ATCC 27184 / PCC 6803 / Kazusa).